We begin with the raw amino-acid sequence, 473 residues long: FAD-dependent monooxygenase ctvC (473 aa).

Glutamate 37, alanine 51, and arginine 110 together coordinate FAD. Residues isoleucine 218 to leucine 238 form a helical membrane-spanning segment. FAD-binding residues include aspartate 310 and alanine 323. Asparagine 358 carries N-linked (GlcNAc...) asparagine glycosylation. Residues leucine 451–asparagine 471 form a helical membrane-spanning segment.

The protein belongs to the paxM FAD-dependent monooxygenase family. The cofactor is FAD.

The protein resides in the membrane. The protein operates within mycotoxin biosynthesis. In terms of biological role, FAD-dependent monooxygenase; part of the gene cluster that mediates the biosynthesis of citreoviridin, an inhibitor of the of F1-ATPase beta-subunit. The HR-PKS ctvA accepts acetyl-CoA as the starter unit and catalyzes eight iterations of malonyl-CoA extension and four iterations of SAM-dependent methylation at C4, C12, C14, and C16. The KR and DH domains selectively act on the first six iterations to generate the hexaene chain. In the last three iterations, the KR and DH domains terminate their functions to yield a beta,delta-diketo ester moiety, which then undergoes intramolecular cyclization to yield an alpha-pyrone intermediate. Subsequently, ctvB methylates the alpha-pyrone hydroxyl group to generate citreomontanin. In order to form the tetrahydrofuran ring with the correct stereochemistry, the terminal alkenes of citreomontanin need to undergo isomerization to yield a (17Z)-hexaene, a step that could be catalyzed by ctvC. The (17Z)-hexaene then undergoes bisepoxidation by ctvC to form a (17R,16R,15S,14R)-bisepoxide moiety. Lastly, ctvD acts as a regioselective hydrolase to form the tetrahydrofuran ring with the substituents in the correct absolute configuration, completing the biosynthesis of citreoviridin. This is FAD-dependent monooxygenase ctvC from Aspergillus terreus (strain NIH 2624 / FGSC A1156).